A 238-amino-acid polypeptide reads, in one-letter code: Aspartate/glutamate leucyltransferase (238 aa).

The protein belongs to the R-transferase family. Bpt subfamily.

It is found in the cytoplasm. It catalyses the reaction N-terminal L-glutamyl-[protein] + L-leucyl-tRNA(Leu) = N-terminal L-leucyl-L-glutamyl-[protein] + tRNA(Leu) + H(+). The enzyme catalyses N-terminal L-aspartyl-[protein] + L-leucyl-tRNA(Leu) = N-terminal L-leucyl-L-aspartyl-[protein] + tRNA(Leu) + H(+). Functions in the N-end rule pathway of protein degradation where it conjugates Leu from its aminoacyl-tRNA to the N-termini of proteins containing an N-terminal aspartate or glutamate. In Shewanella sp. (strain ANA-3), this protein is Aspartate/glutamate leucyltransferase.